The primary structure comprises 422 residues: Serine--tRNA ligase (422 aa).

229–231 (TAE) serves as a coordination point for L-serine. Position 260–262 (260–262 (RRE)) interacts with ATP. Glutamate 283 contributes to the L-serine binding site. Residue 347 to 350 (EISS) participates in ATP binding. Position 383 (serine 383) interacts with L-serine.

The protein belongs to the class-II aminoacyl-tRNA synthetase family. Type-1 seryl-tRNA synthetase subfamily. Homodimer. The tRNA molecule binds across the dimer.

It is found in the cytoplasm. The enzyme catalyses tRNA(Ser) + L-serine + ATP = L-seryl-tRNA(Ser) + AMP + diphosphate + H(+). It carries out the reaction tRNA(Sec) + L-serine + ATP = L-seryl-tRNA(Sec) + AMP + diphosphate + H(+). Its pathway is aminoacyl-tRNA biosynthesis; selenocysteinyl-tRNA(Sec) biosynthesis; L-seryl-tRNA(Sec) from L-serine and tRNA(Sec): step 1/1. Functionally, catalyzes the attachment of serine to tRNA(Ser). Is also able to aminoacylate tRNA(Sec) with serine, to form the misacylated tRNA L-seryl-tRNA(Sec), which will be further converted into selenocysteinyl-tRNA(Sec). This Pelobacter propionicus (strain DSM 2379 / NBRC 103807 / OttBd1) protein is Serine--tRNA ligase.